We begin with the raw amino-acid sequence, 124 residues long: MKSIGCDIIKVERFKSFLENKKKMERFFTHKEIENFKLKGGSIIESLAGKFAAKESLIKALTPLLQYKIRYSLKDIEVIKSLKGNAKFCLHNEIEKFAIKMNLKLYLTISHEKEYAIAFVMVEN.

Mg(2+) contacts are provided by Asp7 and Glu55.

Belongs to the P-Pant transferase superfamily. AcpS family. Mg(2+) is required as a cofactor.

The protein localises to the cytoplasm. It carries out the reaction apo-[ACP] + CoA = holo-[ACP] + adenosine 3',5'-bisphosphate + H(+). Functionally, transfers the 4'-phosphopantetheine moiety from coenzyme A to a Ser of acyl-carrier-protein. This Borreliella afzelii (strain PKo) (Borrelia afzelii) protein is Holo-[acyl-carrier-protein] synthase.